The primary structure comprises 484 residues: ATP synthase subunit beta (484 aa).

Residue 162–169 (GGAGVGKT) coordinates ATP.

It belongs to the ATPase alpha/beta chains family. As to quaternary structure, F-type ATPases have 2 components, CF(1) - the catalytic core - and CF(0) - the membrane proton channel. CF(1) has five subunits: alpha(3), beta(3), gamma(1), delta(1), epsilon(1). CF(0) has three main subunits: a(1), b(2) and c(9-12). The alpha and beta chains form an alternating ring which encloses part of the gamma chain. CF(1) is attached to CF(0) by a central stalk formed by the gamma and epsilon chains, while a peripheral stalk is formed by the delta and b chains.

Its subcellular location is the cell inner membrane. The catalysed reaction is ATP + H2O + 4 H(+)(in) = ADP + phosphate + 5 H(+)(out). Its function is as follows. Produces ATP from ADP in the presence of a proton gradient across the membrane. The catalytic sites are hosted primarily by the beta subunits. This chain is ATP synthase subunit beta, found in Agrobacterium fabrum (strain C58 / ATCC 33970) (Agrobacterium tumefaciens (strain C58)).